Consider the following 82-residue polypeptide: UPF0213 protein SH2523 (82 aa).

The GIY-YIG domain maps to alanine 2 to lysine 77.

The protein belongs to the UPF0213 family.

The protein is UPF0213 protein SH2523 of Staphylococcus haemolyticus (strain JCSC1435).